The sequence spans 372 residues: 4-hydroxy-3-methylbut-2-en-1-yl diphosphate synthase (flavodoxin) (372 aa).

Residues Cys270, Cys273, Cys305, and Glu312 each contribute to the [4Fe-4S] cluster site.

Belongs to the IspG family. The cofactor is [4Fe-4S] cluster.

It catalyses the reaction (2E)-4-hydroxy-3-methylbut-2-enyl diphosphate + oxidized [flavodoxin] + H2O + 2 H(+) = 2-C-methyl-D-erythritol 2,4-cyclic diphosphate + reduced [flavodoxin]. Its pathway is isoprenoid biosynthesis; isopentenyl diphosphate biosynthesis via DXP pathway; isopentenyl diphosphate from 1-deoxy-D-xylulose 5-phosphate: step 5/6. Its function is as follows. Converts 2C-methyl-D-erythritol 2,4-cyclodiphosphate (ME-2,4cPP) into 1-hydroxy-2-methyl-2-(E)-butenyl 4-diphosphate. The protein is 4-hydroxy-3-methylbut-2-en-1-yl diphosphate synthase (flavodoxin) of Salmonella choleraesuis (strain SC-B67).